The following is a 473-amino-acid chain: ATP synthase subunit beta (473 aa).

158 to 165 (GGAGVGKT) contributes to the ATP binding site.

It belongs to the ATPase alpha/beta chains family. As to quaternary structure, F-type ATPases have 2 components, CF(1) - the catalytic core - and CF(0) - the membrane proton channel. CF(1) has five subunits: alpha(3), beta(3), gamma(1), delta(1), epsilon(1). CF(0) has three main subunits: a(1), b(2) and c(9-12). The alpha and beta chains form an alternating ring which encloses part of the gamma chain. CF(1) is attached to CF(0) by a central stalk formed by the gamma and epsilon chains, while a peripheral stalk is formed by the delta and b chains.

The protein localises to the cell membrane. It catalyses the reaction ATP + H2O + 4 H(+)(in) = ADP + phosphate + 5 H(+)(out). Functionally, produces ATP from ADP in the presence of a proton gradient across the membrane. The catalytic sites are hosted primarily by the beta subunits. This is ATP synthase subunit beta from Carboxydothermus hydrogenoformans (strain ATCC BAA-161 / DSM 6008 / Z-2901).